The primary structure comprises 335 residues: MKYLILAALVAVTAGLVIPLVPKTQEAITEYVNSKQSLWKAEIPKDITIEQVKKRLMRTEFVAPHTPDVEVVKHDINEDTIPATFDARTQWPNCMSINNIRDQSDCGSCWAFAAAEAASDRFCIASNGAVNTLLSAEDVLSCCSNCGYGCEGGYPINAWKYLVKSGFCTGGSYEAQFGCKPYSLAPCGETVGNVTWPSCPDDGYDTPACVNKCTNKNYNVAYTADKHFGSTAYAVGKKVSQIQAEIIAHGPVEAAFTVYEDFYQYKTGVYVHTTGQELGGHAIRILGWGTDNGTPYWLVANSWNVNWGENGYFRIIRGTNECGIEHAVVGGVPKV.

An N-terminal signal peptide occupies residues 1–15 (MKYLILAALVAVTAG). Residues 16 to 80 (LVIPLVPKTQ…VVKHDINEDT (65 aa)) constitute a propeptide that is removed on maturation. Cystine bridges form between Cys-94/Cys-123, Cys-106/Cys-150, Cys-142/Cys-209, Cys-143/Cys-146, Cys-179/Cys-213, and Cys-187/Cys-199. Cys-109 is an active-site residue. Asn-193 is a glycosylation site (N-linked (GlcNAc...) asparagine). Catalysis depends on residues His-281 and Asn-301.

This sequence belongs to the peptidase C1 family.

It localises to the secreted. Its function is as follows. Thiol protease which shows activity against the fluorogenic substrate z-Arg-Arg-AMC. The protein is Cathepsin B-like cysteine proteinase 4 (cpr-4) of Caenorhabditis elegans.